The following is a 143-amino-acid chain: Methylglyoxal synthase (143 aa).

The region spanning 1–143 (MTVKKIALVA…DYEAYRNRII (143 aa)) is the MGS-like domain. Substrate is bound by residues His11, Lys15, 37–40 (TGST), and 57–58 (SG). The Proton donor/acceptor role is filled by Asp63. His90 contributes to the substrate binding site.

Belongs to the methylglyoxal synthase family.

It carries out the reaction dihydroxyacetone phosphate = methylglyoxal + phosphate. Catalyzes the formation of methylglyoxal from dihydroxyacetone phosphate. The sequence is that of Methylglyoxal synthase from Coxiella burnetii (strain Dugway 5J108-111).